Consider the following 155-residue polypeptide: UPF0178 protein ACICU_02858 (155 aa).

A disordered region spans residues 120–155 (GAGVQTGGPPPISERDKREFSSALDQTILKQKRKTA).

Belongs to the UPF0178 family.

This Acinetobacter baumannii (strain ACICU) protein is UPF0178 protein ACICU_02858.